The sequence spans 90 residues: DNA-directed RNA polymerase subunit omega (90 aa).

This sequence belongs to the RNA polymerase subunit omega family. The RNAP catalytic core consists of 2 alpha, 1 beta, 1 beta' and 1 omega subunit. When a sigma factor is associated with the core the holoenzyme is formed, which can initiate transcription.

The enzyme catalyses RNA(n) + a ribonucleoside 5'-triphosphate = RNA(n+1) + diphosphate. Promotes RNA polymerase assembly. Latches the N- and C-terminal regions of the beta' subunit thereby facilitating its interaction with the beta and alpha subunits. This chain is DNA-directed RNA polymerase subunit omega, found in Saccharophagus degradans (strain 2-40 / ATCC 43961 / DSM 17024).